We begin with the raw amino-acid sequence, 77 residues long: Sec-independent protein translocase protein TatA (77 aa).

A helical transmembrane segment spans residues 2–22 (GFGGISIWQLLIILLIVVMLF). Basic and acidic residues-rich tracts occupy residues 46 to 59 (DNGE…EEPK) and 66 to 77 (QARKVEEPAKKD). The tract at residues 46-77 (DNGEAEKPAVEEPKGQTIDAQARKVEEPAKKD) is disordered.

Belongs to the TatA/E family. The Tat system comprises two distinct complexes: a TatABC complex, containing multiple copies of TatA, TatB and TatC subunits, and a separate TatA complex, containing only TatA subunits. Substrates initially bind to the TatABC complex, which probably triggers association of the separate TatA complex to form the active translocon.

It is found in the cell inner membrane. Functionally, part of the twin-arginine translocation (Tat) system that transports large folded proteins containing a characteristic twin-arginine motif in their signal peptide across membranes. TatA could form the protein-conducting channel of the Tat system. The polypeptide is Sec-independent protein translocase protein TatA (Ectopseudomonas mendocina (strain ymp) (Pseudomonas mendocina)).